The following is an 80-amino-acid chain: Putative ankyrin repeat protein RC0877 (80 aa).

An ANK repeat occupies 6 to 46 (SGGIPLHAVAKNVRCTSKDIKDYEIYKLLVSYGADINARVE).

The sequence is that of Putative ankyrin repeat protein RC0877 from Rickettsia conorii (strain ATCC VR-613 / Malish 7).